A 175-amino-acid chain; its full sequence is Threonylcarbamoyl-AMP synthase (175 aa).

The YrdC-like domain maps to 1-175 (MLHNDDVIAY…IINGKLIRYV (175 aa)).

Belongs to the SUA5 family. TsaC subfamily.

Its subcellular location is the cytoplasm. It carries out the reaction L-threonine + hydrogencarbonate + ATP = L-threonylcarbamoyladenylate + diphosphate + H2O. In terms of biological role, required for the formation of a threonylcarbamoyl group on adenosine at position 37 (t(6)A37) in tRNAs that read codons beginning with adenine. Catalyzes the conversion of L-threonine, HCO(3)(-)/CO(2) and ATP to give threonylcarbamoyl-AMP (TC-AMP) as the acyladenylate intermediate, with the release of diphosphate. In Buchnera aphidicola subsp. Acyrthosiphon pisum (strain APS) (Acyrthosiphon pisum symbiotic bacterium), this protein is Threonylcarbamoyl-AMP synthase.